Consider the following 66-residue polypeptide: uncharacterized protein (66 aa).

Over residues 1–18 (MSTTSSSSTFSTRTASLS) the composition is skewed to low complexity. The disordered stretch occupies residues 1 to 22 (MSTTSSSSTFSTRTASLSQSYT).

This is an uncharacterized protein from Schizosaccharomyces pombe (strain 972 / ATCC 24843) (Fission yeast).